Reading from the N-terminus, the 647-residue chain is Threonine--tRNA ligase (647 aa).

In terms of domain architecture, TGS spans 1–61; sequence MIKITFPDGA…EEDGSIEIVT (61 aa). Positions 240-538 are catalytic; the sequence is DHRKLGKELD…LIETYKGAFP (299 aa). Zn(2+) is bound by residues cysteine 334, histidine 385, and histidine 515.

Belongs to the class-II aminoacyl-tRNA synthetase family. Homodimer. The cofactor is Zn(2+).

Its subcellular location is the cytoplasm. The catalysed reaction is tRNA(Thr) + L-threonine + ATP = L-threonyl-tRNA(Thr) + AMP + diphosphate + H(+). Its function is as follows. Catalyzes the attachment of threonine to tRNA(Thr) in a two-step reaction: L-threonine is first activated by ATP to form Thr-AMP and then transferred to the acceptor end of tRNA(Thr). Also edits incorrectly charged L-seryl-tRNA(Thr). The polypeptide is Threonine--tRNA ligase (Streptococcus pyogenes serotype M4 (strain MGAS10750)).